The sequence spans 273 residues: Putative ankyrin repeat protein RBE_0317 (273 aa).

5 ANK repeats span residues 31–60 (LGKE…DFYS), 93–123 (NGNT…EVNT), 127–157 (GGNS…NVNE), 161–191 (YGDT…DVNE), and 195–225 (QGET…DTKQ).

The polypeptide is Putative ankyrin repeat protein RBE_0317 (Rickettsia bellii (strain RML369-C)).